Here is a 558-residue protein sequence, read N- to C-terminus: Glutamine--tRNA ligase (558 aa).

Positions 36–46 (PEPNGYLHIGH) match the 'HIGH' region motif. Residues 37-39 (EPN) and 43-49 (HIGHAKS) contribute to the ATP site. 2 residues coordinate L-glutamine: Asp-69 and Tyr-214. ATP contacts are provided by residues Thr-233, 263-264 (RL), and 271-273 (LSK). Residues 270 to 274 (LLSKR) carry the 'KMSKS' region motif.

It belongs to the class-I aminoacyl-tRNA synthetase family. Monomer.

The protein localises to the cytoplasm. The catalysed reaction is tRNA(Gln) + L-glutamine + ATP = L-glutaminyl-tRNA(Gln) + AMP + diphosphate. This is Glutamine--tRNA ligase from Bradyrhizobium diazoefficiens (strain JCM 10833 / BCRC 13528 / IAM 13628 / NBRC 14792 / USDA 110).